A 3573-amino-acid chain; its full sequence is Zinc finger homeobox protein 4 (3573 aa).

Polar residues predominate over residues Met-1–Asp-28. 3 disordered regions span residues Met-1 to Asp-54, Leu-425 to Ser-479, and Thr-522 to Gly-606. 2 stretches are compositionally biased toward basic and acidic residues: residues Glu-39 to Asp-54 and Lys-434 to Asn-452. A compositionally biased stretch (acidic residues) spans Glu-468 to Ser-479. Polar residues predominate over residues Ser-585 to Ser-599. C2H2-type zinc fingers lie at residues Ile-609 to His-632, Leu-640 to His-663, and Phe-695 to His-719. A C2H2-type 4; degenerate zinc finger spans residues Trp-763 to Glu-785. 3 consecutive C2H2-type zinc fingers follow at residues Tyr-913–His-937, Leu-969–His-991, and Tyr-1017–His-1041. The interval Gly-1096–Val-1132 is disordered. Over residues Gly-1111 to Lys-1129 the composition is skewed to basic and acidic residues. C2H2-type zinc fingers lie at residues Tyr-1168 to His-1191 and Ile-1197 to His-1220. The tract at residues Ala-1250 to Val-1340 is disordered. Basic and acidic residues predominate over residues Val-1277–Ala-1306. A compositionally biased stretch (polar residues) spans Thr-1322–Val-1340. C2H2-type zinc fingers lie at residues Tyr-1348 to His-1370 and Thr-1376 to His-1399. The tract at residues Tyr-1442 to Lys-1476 is disordered. 2 C2H2-type zinc fingers span residues Tyr-1492–His-1518 and Tyr-1544–His-1568. Disordered stretches follow at residues Leu-1577–Pro-1596 and Tyr-1795–Gly-1843. Low complexity predominate over residues Ser-1580 to Pro-1596. Residues Tyr-1795 to Ser-1830 are compositionally biased toward basic and acidic residues. The C2H2-type 14 zinc-finger motif lies at Leu-1886–His-1909. Residues Tyr-1933 to Pro-2013 are disordered. 2 stretches are compositionally biased toward pro residues: residues Pro-1940 to Ser-1962 and Leu-1980 to Pro-2007. 2 DNA-binding regions (homeobox) span residues Phe-2072 to Asn-2131 and Lys-2169 to Tyr-2228. The C2H2-type 15; degenerate zinc-finger motif lies at Tyr-2255–Tyr-2279. 2 disordered regions span residues Cys-2278–Asp-2300 and Ser-2318–Gln-2426. Residues Asp-2281–Asp-2297 show a composition bias toward acidic residues. The segment covering Ser-2318–Leu-2334 has biased composition (low complexity). The segment covering Pro-2340–Pro-2357 has biased composition (basic and acidic residues). 2 stretches are compositionally biased toward low complexity: residues Thr-2360–Lys-2373 and Pro-2382–Val-2413. The C2H2-type 16 zinc finger occupies Tyr-2436–His-2458. The segment covering Leu-2499–Ser-2509 has biased composition (polar residues). Positions Leu-2499–Thr-2553 are disordered. Positions Arg-2523–Arg-2547 are enriched in basic and acidic residues. Positions Asp-2548–Gln-2607 form a DNA-binding region, homeobox 3. The C2H2-type 17 zinc finger occupies Lys-2618–His-2641. Disordered regions lie at residues Glu-2704 to Leu-2788 and Phe-2820 to Lys-2875. 2 stretches are compositionally biased toward polar residues: residues Asn-2709–Ala-2718 and Thr-2746–Ser-2773. Over residues Phe-2820–Gln-2829 the composition is skewed to basic and acidic residues. A DNA-binding region (homeobox 4) is located at residues His-2874–Lys-2933. The C2H2-type 18; degenerate zinc-finger motif lies at Pro-2952–His-2976. Disordered regions lie at residues Pro-3060–Lys-3174 and Leu-3287–Lys-3343. Positions Pro-3084 to Leu-3104 are enriched in low complexity. Residues Gln-3105 to Ser-3129 show a composition bias toward pro residues. Residues Ile-3159–Lys-3174 show a composition bias toward basic and acidic residues. The stretch at Ala-3271–Asn-3316 forms a coiled coil. Over residues Leu-3287–Lys-3305 the composition is skewed to low complexity. A compositionally biased stretch (basic and acidic residues) spans Ser-3321 to Lys-3343. A C2H2-type 19; degenerate zinc finger spans residues Phe-3360–Tyr-3384. The C2H2-type 20 zinc finger occupies Tyr-3404–His-3428. Disordered regions lie at residues His-3449–Ser-3468 and Thr-3518–Glu-3543. Over residues Ser-3453 to Ser-3468 the composition is skewed to low complexity.

The protein belongs to the krueppel C2H2-type zinc-finger protein family.

Its subcellular location is the nucleus. May play a role in neural and muscle differentiation. May be involved in transcriptional regulation. In Gallus gallus (Chicken), this protein is Zinc finger homeobox protein 4 (ZFHX4).